The following is a 320-amino-acid chain: Lipoyl synthase (320 aa).

A disordered region spans residues 9–31; sequence ANDARPRHPEKAHRPDQPIQRKP. Basic and acidic residues predominate over residues 12-31; it reads ARPRHPEKAHRPDQPIQRKP. 7 residues coordinate [4Fe-4S] cluster: C60, C65, C71, C86, C90, C93, and S299. Residues 72-288 form the Radical SAM core domain; sequence WEKKHATFMI…ETTAYAKGFL (217 aa).

It belongs to the radical SAM superfamily. Lipoyl synthase family. It depends on [4Fe-4S] cluster as a cofactor.

It localises to the cytoplasm. It catalyses the reaction [[Fe-S] cluster scaffold protein carrying a second [4Fe-4S](2+) cluster] + N(6)-octanoyl-L-lysyl-[protein] + 2 oxidized [2Fe-2S]-[ferredoxin] + 2 S-adenosyl-L-methionine + 4 H(+) = [[Fe-S] cluster scaffold protein] + N(6)-[(R)-dihydrolipoyl]-L-lysyl-[protein] + 4 Fe(3+) + 2 hydrogen sulfide + 2 5'-deoxyadenosine + 2 L-methionine + 2 reduced [2Fe-2S]-[ferredoxin]. Its pathway is protein modification; protein lipoylation via endogenous pathway; protein N(6)-(lipoyl)lysine from octanoyl-[acyl-carrier-protein]: step 2/2. Catalyzes the radical-mediated insertion of two sulfur atoms into the C-6 and C-8 positions of the octanoyl moiety bound to the lipoyl domains of lipoate-dependent enzymes, thereby converting the octanoylated domains into lipoylated derivatives. The sequence is that of Lipoyl synthase from Methylobacterium nodulans (strain LMG 21967 / CNCM I-2342 / ORS 2060).